A 425-amino-acid polypeptide reads, in one-letter code: Kynureninase (425 aa).

Residues L105, T106, 133-136 (FPSD), D218, H221, and Y243 each bind pyridoxal 5'-phosphate. K244 carries the post-translational modification N6-(pyridoxal phosphate)lysine. W274 and N302 together coordinate pyridoxal 5'-phosphate.

It belongs to the kynureninase family. Homodimer. Pyridoxal 5'-phosphate serves as cofactor.

The catalysed reaction is L-kynurenine + H2O = anthranilate + L-alanine + H(+). It catalyses the reaction 3-hydroxy-L-kynurenine + H2O = 3-hydroxyanthranilate + L-alanine + H(+). Its pathway is amino-acid degradation; L-kynurenine degradation; L-alanine and anthranilate from L-kynurenine: step 1/1. The protein operates within cofactor biosynthesis; NAD(+) biosynthesis; quinolinate from L-kynurenine: step 2/3. In terms of biological role, catalyzes the cleavage of L-kynurenine (L-Kyn) and L-3-hydroxykynurenine (L-3OHKyn) into anthranilic acid (AA) and 3-hydroxyanthranilic acid (3-OHAA), respectively. The sequence is that of Kynureninase from Flavobacterium johnsoniae (strain ATCC 17061 / DSM 2064 / JCM 8514 / BCRC 14874 / CCUG 350202 / NBRC 14942 / NCIMB 11054 / UW101) (Cytophaga johnsonae).